The following is a 662-amino-acid chain: Transcription activator of gluconeogenesis NECHADRAFT_59099 (662 aa).

The interval 1–61 (MPHEMEENGA…KDPLRPRRKK (61 aa)) is disordered. Basic and acidic residues-rich tracts occupy residues 25 to 34 (TFLKDDEKMT) and 43 to 56 (TEVK…DPLR). A DNA-binding region (zn(2)-C6 fungal-type) is located at residues 66–94 (CFACQRAHLTCGDERPCQRCIKRGLADAC). 3 disordered regions span residues 105–149 (LHDA…TGSN), 502–524 (YSGR…MTTP), and 580–606 (YRAP…SSRV). Polar residues-rich tracts occupy residues 121-130 (YNPTPTPSRT) and 137-149 (SSQS…TGSN). The 72-residue stretch at 448–519 (TLVEYDDFLQ…TNTPDHNSQG (72 aa)) folds into the PAS domain. The segment covering 582-593 (APQDPDQKEPGS) has biased composition (basic and acidic residues).

Belongs to the ERT1/acuK family.

The protein localises to the nucleus. Its function is as follows. Transcription factor which regulates nonfermentable carbon utilization. Activator of gluconeogenetic genes. The chain is Transcription activator of gluconeogenesis NECHADRAFT_59099 from Fusarium vanettenii (strain ATCC MYA-4622 / CBS 123669 / FGSC 9596 / NRRL 45880 / 77-13-4) (Fusarium solani subsp. pisi).